The following is a 352-amino-acid chain: Peptide chain release factor 1 (352 aa).

The residue at position 230 (Gln-230) is an N5-methylglutamine.

The protein belongs to the prokaryotic/mitochondrial release factor family. Methylated by PrmC. Methylation increases the termination efficiency of RF1.

The protein resides in the cytoplasm. Its function is as follows. Peptide chain release factor 1 directs the termination of translation in response to the peptide chain termination codons UAG and UAA. This is Peptide chain release factor 1 from Exiguobacterium sibiricum (strain DSM 17290 / CCUG 55495 / CIP 109462 / JCM 13490 / 255-15).